A 91-amino-acid chain; its full sequence is DNA-directed RNA polymerase subunit omega (91 aa).

It belongs to the RNA polymerase subunit omega family. In terms of assembly, the RNAP catalytic core consists of 2 alpha, 1 beta, 1 beta' and 1 omega subunit. When a sigma factor is associated with the core the holoenzyme is formed, which can initiate transcription.

The enzyme catalyses RNA(n) + a ribonucleoside 5'-triphosphate = RNA(n+1) + diphosphate. Functionally, promotes RNA polymerase assembly. Latches the N- and C-terminal regions of the beta' subunit thereby facilitating its interaction with the beta and alpha subunits. This is DNA-directed RNA polymerase subunit omega from Shigella flexneri.